Reading from the N-terminus, the 75-residue chain is Kappa-scoloptoxin(03)-Ssm1d (75 aa).

The N-terminal stretch at methionine 1–serine 23 is a signal peptide.

This sequence belongs to the scoloptoxin-03 family. Post-translationally, contains 3 disulfide bonds. Expressed by the venom gland.

It localises to the secreted. Inhibits voltage-gated potassium channels. In Scolopendra mutilans (Chinese red-headed centipede), this protein is Kappa-scoloptoxin(03)-Ssm1d.